The primary structure comprises 279 residues: MQVLWKKFQKKLIDANLAECGIEIGVPNVGYNYTVFQKSVLHIVTQGEGTFSYAGETYHLTAGDIFLLERGMEVEYKPSFSNPWTYYWVGMNGKQILNYLSRCSIVDSHVILGQDTTDIKNIIQLICKLSQSIESNNSNDILIMQYLYQLVYTLQEKFPKIFSVQVDIVNEDIQHAVDFINTNYQKHITVEDVAKSVNITRSHLYKLFKKNLGCSPKEYLTYIRMYHASQLLIHTSTLISDISRQVGYKDPLLFSKNFTKHFEISASEYRHHFSINNKQ.

One can recognise an HTH araC/xylS-type domain in the interval 174-272 (QHAVDFINTN…EISASEYRHH (99 aa)). 2 DNA-binding regions (H-T-H motif) span residues 191–212 (EDVA…KKNL) and 239–262 (ISDI…TKHF).

In terms of biological role, transcriptional regulator of the lacPH genes for lactose utilization. This chain is Lactose operon transcription activator (lacR), found in Staphylococcus xylosus.